A 911-amino-acid chain; its full sequence is Protein translocase subunit SecA (911 aa).

ATP is bound by residues Gln87, 105–109, and Asp513; that span reads GEGKT. A disordered region spans residues 853–911; it reads IQLQHEQVSGLEPEAGEAPSAGEPRSEQPYVRAGRKVGRNDPCPCGSGKKFKACHGKLG. Residues 862-875 are compositionally biased toward low complexity; that stretch reads GLEPEAGEAPSAGE. 4 residues coordinate Zn(2+): Cys895, Cys897, Cys906, and His907. Residues 901–911 are compositionally biased toward basic residues; the sequence is KKFKACHGKLG.

The protein belongs to the SecA family. Monomer and homodimer. Part of the essential Sec protein translocation apparatus which comprises SecA, SecYEG and auxiliary proteins SecDF-YajC and YidC. Zn(2+) serves as cofactor.

The protein localises to the cell inner membrane. The protein resides in the cytoplasm. It carries out the reaction ATP + H2O + cellular proteinSide 1 = ADP + phosphate + cellular proteinSide 2.. In terms of biological role, part of the Sec protein translocase complex. Interacts with the SecYEG preprotein conducting channel. Has a central role in coupling the hydrolysis of ATP to the transfer of proteins into and across the cell membrane, serving both as a receptor for the preprotein-SecB complex and as an ATP-driven molecular motor driving the stepwise translocation of polypeptide chains across the membrane. The sequence is that of Protein translocase subunit SecA from Teredinibacter turnerae (strain ATCC 39867 / T7901).